The chain runs to 335 residues: Probable UDP-N-acetylglucosamine pyrophosphorylase (335 aa).

Residues 45–48 (LSGG) carry the Substrate binding motif. UTP is bound by residues 45 to 48 (LSGG), Lys59, Gln120, and Gly145. Asn146 serves as a coordination point for substrate. Asp170 contacts UTP. The Substrate binding signature appears at 218–219 (EY). Lys278 lines the UTP pocket. Position 308 (Lys308) interacts with substrate.

The protein belongs to the UDPGP type 1 family.

It localises to the cytoplasm. The catalysed reaction is N-acetyl-alpha-D-glucosamine 1-phosphate + UTP + H(+) = UDP-N-acetyl-alpha-D-glucosamine + diphosphate. The protein operates within nucleotide-sugar biosynthesis; UDP-N-acetyl-alpha-D-glucosamine biosynthesis; UDP-N-acetyl-alpha-D-glucosamine from N-acetyl-alpha-D-glucosamine 1-phosphate: step 1/1. In Encephalitozoon cuniculi (strain GB-M1) (Microsporidian parasite), this protein is Probable UDP-N-acetylglucosamine pyrophosphorylase (UAP1).